We begin with the raw amino-acid sequence, 521 residues long: Tigger transposable element-derived protein 6 (521 aa).

The 52-residue stretch at 3–54 (NKGNKKRRQFSLEEKMKVVGAVDSGKRKGDVAKEFGITPSTLSTFLKDRTKF) folds into the HTH psq-type domain. 2 DNA-binding regions (H-T-H motif) span residues 30–50 (KGDV…FLKD) and 99–130 (SVIR…FRDR). Positions 66–137 (QRKRMRSALY…RDRHGIALKA (72 aa)) constitute an HTH CENPB-type domain. The DDE-1 domain maps to 170-372 (YSPDDIFNAD…VKPSTVVKCW (203 aa)).

It belongs to the tigger transposable element derived protein family.

It localises to the nucleus. This chain is Tigger transposable element-derived protein 6 (TIGD6), found in Homo sapiens (Human).